A 446-amino-acid chain; its full sequence is GTPase Der (446 aa).

2 EngA-type G domains span residues 2-166 and 179-354; these read TVVA…PEAP and IRVS…RQYN. GTP contacts are provided by residues 8–15, 55–59, 118–121, 185–192, 232–236, and 297–300; these read GRPNVGKS, DTAGF, NKID, DTAGI, and NKWD. A KH-like domain is found at 355–440; sequence QRVTTGIVNR…PIRLIFRPRQ (86 aa).

The protein belongs to the TRAFAC class TrmE-Era-EngA-EngB-Septin-like GTPase superfamily. EngA (Der) GTPase family. As to quaternary structure, associates with the 50S ribosomal subunit.

GTPase that plays an essential role in the late steps of ribosome biogenesis. The protein is GTPase Der of Syntrophobacter fumaroxidans (strain DSM 10017 / MPOB).